The sequence spans 133 residues: Ribosome-binding factor A (133 aa).

The protein belongs to the RbfA family. As to quaternary structure, monomer. Binds 30S ribosomal subunits, but not 50S ribosomal subunits or 70S ribosomes.

The protein localises to the cytoplasm. Its function is as follows. One of several proteins that assist in the late maturation steps of the functional core of the 30S ribosomal subunit. Associates with free 30S ribosomal subunits (but not with 30S subunits that are part of 70S ribosomes or polysomes). Required for efficient processing of 16S rRNA. May interact with the 5'-terminal helix region of 16S rRNA. The polypeptide is Ribosome-binding factor A (Salmonella schwarzengrund (strain CVM19633)).